We begin with the raw amino-acid sequence, 135 residues long: S-protein homolog 29 (135 aa).

The first 24 residues, 1–24 (MKNSSKIFVVLSIILFYVISSCHG), serve as a signal peptide directing secretion. A glycan (N-linked (GlcNAc...) asparagine) is linked at Asn110.

This sequence belongs to the plant self-incompatibility (S1) protein family.

Its subcellular location is the secreted. The sequence is that of S-protein homolog 29 from Arabidopsis thaliana (Mouse-ear cress).